We begin with the raw amino-acid sequence, 114 residues long: Superoxide dismutase [Cu-Zn] (114 aa).

The Cu cation site is built by H37, H39, and H54. The interval 48–76 is disordered; sequence CMSSGPHFNPRSKEHGAPTDENRHLGDLG. Residues H54, H62, H71, and D74 each contribute to the Zn(2+) site. A compositionally biased stretch (basic and acidic residues) spans 58–73; that stretch reads RSKEHGAPTDENRHLG. Residue H111 coordinates Cu cation.

Belongs to the Cu-Zn superoxide dismutase family. In terms of assembly, homodimer. Requires Cu cation as cofactor. The cofactor is Zn(2+).

It is found in the cytoplasm. The catalysed reaction is 2 superoxide + 2 H(+) = H2O2 + O2. Its function is as follows. Destroys radicals which are normally produced within the cells and which are toxic to biological systems. The protein is Superoxide dismutase [Cu-Zn] of Drosophila obscura (Fruit fly).